The primary structure comprises 159 residues: Transcription elongation factor GreA (159 aa).

Residues 44–75 adopt a coiled-coil conformation; that stretch reads SENAEYDAAREQQSQTEARIADLESKLSSATI.

This sequence belongs to the GreA/GreB family.

In terms of biological role, necessary for efficient RNA polymerase transcription elongation past template-encoded arresting sites. The arresting sites in DNA have the property of trapping a certain fraction of elongating RNA polymerases that pass through, resulting in locked ternary complexes. Cleavage of the nascent transcript by cleavage factors such as GreA or GreB allows the resumption of elongation from the new 3'terminus. GreA releases sequences of 2 to 3 nucleotides. The sequence is that of Transcription elongation factor GreA from Chlorobium phaeovibrioides (strain DSM 265 / 1930) (Prosthecochloris vibrioformis (strain DSM 265)).